Reading from the N-terminus, the 207-residue chain is Thymidylate kinase (207 aa).

7 to 14 serves as a coordination point for ATP; it reads GPEGAGKS.

Belongs to the thymidylate kinase family.

The catalysed reaction is dTMP + ATP = dTDP + ADP. Its function is as follows. Phosphorylation of dTMP to form dTDP in both de novo and salvage pathways of dTTP synthesis. The polypeptide is Thymidylate kinase (Pseudomonas putida (strain W619)).